A 95-amino-acid chain; its full sequence is Co-chaperonin GroES (95 aa).

The protein belongs to the GroES chaperonin family. In terms of assembly, heptamer of 7 subunits arranged in a ring. Interacts with the chaperonin GroEL.

The protein resides in the cytoplasm. In terms of biological role, together with the chaperonin GroEL, plays an essential role in assisting protein folding. The GroEL-GroES system forms a nano-cage that allows encapsulation of the non-native substrate proteins and provides a physical environment optimized to promote and accelerate protein folding. GroES binds to the apical surface of the GroEL ring, thereby capping the opening of the GroEL channel. The polypeptide is Co-chaperonin GroES (Xylella fastidiosa (strain M23)).